Reading from the N-terminus, the 352-residue chain is Biotin synthase (352 aa).

The Radical SAM core domain occupies 44-262 (NRVQVSTLLS…LAVARIMMPK (219 aa)). Residues cysteine 59, cysteine 63, and cysteine 66 each coordinate [4Fe-4S] cluster. Residues cysteine 103, cysteine 134, cysteine 194, and arginine 266 each coordinate [2Fe-2S] cluster.

It belongs to the radical SAM superfamily. Biotin synthase family. Homodimer. [4Fe-4S] cluster serves as cofactor. Requires [2Fe-2S] cluster as cofactor.

The enzyme catalyses (4R,5S)-dethiobiotin + (sulfur carrier)-SH + 2 reduced [2Fe-2S]-[ferredoxin] + 2 S-adenosyl-L-methionine = (sulfur carrier)-H + biotin + 2 5'-deoxyadenosine + 2 L-methionine + 2 oxidized [2Fe-2S]-[ferredoxin]. It functions in the pathway cofactor biosynthesis; biotin biosynthesis; biotin from 7,8-diaminononanoate: step 2/2. Its function is as follows. Catalyzes the conversion of dethiobiotin (DTB) to biotin by the insertion of a sulfur atom into dethiobiotin via a radical-based mechanism. The sequence is that of Biotin synthase from Pseudomonas aeruginosa (strain UCBPP-PA14).